The following is a 116-amino-acid chain: MSIQDYPSRLSDPQSRKAETFSYLPKMTAEQIKAQVQYIIDRGWNPAIEHSEPENAFSYYWYMWKLPMFGETDADAVLAEVDACIKANPNNHVRLIGYDNYAQSQGANMLVKRGDM.

This sequence belongs to the RuBisCO small chain family. As to quaternary structure, heterohexadecamer of 8 large and 8 small subunits.

The protein resides in the cytoplasm. Its function is as follows. RuBisCO catalyzes two reactions: the carboxylation of D-ribulose 1,5-bisphosphate, the primary event in carbon dioxide fixation, as well as the oxidative fragmentation of the pentose substrate. Both reactions occur simultaneously and in competition at the same active site. Although the small subunit is not catalytic it is essential for maximal activity. In terms of biological role, can replace the endogenous type I ccbS gene in H.neapolitanus, reconstituting RuBisCO with about 10% of normal activity; the active enzyme is targeted to carboxysomes. The chain is Ribulose bisphosphate carboxylase small subunit 1 from Hydrogenovibrio crunogenus (strain DSM 25203 / XCL-2) (Thiomicrospira crunogena).